Here is a 1665-residue protein sequence, read N- to C-terminus: Cortactin-binding protein 2 (1665 aa).

Residues 120-277 (RKMQERMSTQ…EQLKRGNDSK (158 aa)) adopt a coiled-coil conformation. 3 disordered regions span residues 203-222 (EKKKTNELEEELSAEKRRST), 368-480 (VSSV…SPTS), and 500-620 (RFTS…PSID). Polar residues-rich tracts occupy residues 388-399 (SIGSTPDLASST) and 410-429 (TGQTSGIASQNYSQASSMHS). Residues 455–469 (QGNANDQDQNGNTTQ) show a composition bias toward low complexity. Residues 470 to 480 (SPPSRDVSPTS) are compositionally biased toward polar residues. Arg-500 carries the post-translational modification Asymmetric dimethylarginine. 5 ANK repeats span residues 711–741 (GRPTLLQQAAAQGNVTLLSMLLNEEGLDINY), 745–774 (DGHSALYSAAKNGHTDCVRLLLNAKAQIDA), 778–807 (NGFTPLCAAAAQGHFECVELLIAYHANIDH), 811–840 (GGQTPLYLACKNGNKECIKVLLEAGTDRSV), and 844–873 (DGWTPVHAAVDTGNVDSLKLLMYHRAPTLG). The segment at 875 to 902 (SLNEEEPEPGAFDLDQGQEGSEGTAKPV) is disordered. The stretch at 914–944 (EGWTAAHIAASKGFKNCLEILCRHGGLEPER) is one ANK 6 repeat. A disordered region spans residues 1447 to 1495 (CSKKKGENGAWRKVSTNPRKKSGRFSSPTWSKPDLGEEGTKNKTMSQPN). Residue Ser-1526 is modified to Phosphoserine. The tract at residues 1575–1665 (NNLRMPVSQK…KNEQVQKPNK (91 aa)) is disordered. Low complexity-rich tracts occupy residues 1590–1604 (SSHQTTKRSTSTSKT) and 1623–1641 (SQCSQNTKRSSSSSNTRQT). The segment covering 1656–1665 (KNEQVQKPNK) has biased composition (polar residues).

As to quaternary structure, interacts with CTTN/cortactin SH3 domain. Interacts with STRN, STRN4/zinedin and MOB4/phocein; this interactions mediate the association with the STRIPAK core complex and may regulate dendritic spine distribution of the STRIPAK complex in hippocampal neurons. Activation of glutamate receptors weakens the interaction with STRN and STRN4.

Its subcellular location is the cytoplasm. The protein localises to the cell cortex. It localises to the cell projection. It is found in the dendritic spine. Its function is as follows. Regulates the dendritic spine distribution of CTTN/cortactin in hippocampal neurons, and thus controls dendritic spinogenesis and dendritic spine maintenance. Associates with the striatin-interacting phosphatase and kinase (STRIPAK) core complex to regulate dendritic spine distribution of the STRIPAK complex in hippocampal neurons. This Dasypus novemcinctus (Nine-banded armadillo) protein is Cortactin-binding protein 2 (CTTNBP2).